A 470-amino-acid polypeptide reads, in one-letter code: L-fuculokinase (470 aa).

It belongs to the FGGY kinase family. The cofactor is a divalent metal cation.

It catalyses the reaction L-fuculose + ATP = L-fuculose 1-phosphate + ADP + H(+). Its pathway is carbohydrate degradation; L-fucose degradation; L-lactaldehyde and glycerone phosphate from L-fucose: step 2/3. Functionally, catalyzes the phosphorylation of L-fuculose. The polypeptide is L-fuculokinase (Haemophilus influenzae (strain ATCC 51907 / DSM 11121 / KW20 / Rd)).